Reading from the N-terminus, the 181-residue chain is Probable Brix domain-containing ribosomal biogenesis protein (181 aa).

One can recognise a Brix domain in the interval 5–181 (CKVIITTSRE…RIKKVVYRHV (177 aa)).

Its function is as follows. Probably involved in the biogenesis of the ribosome. This Pyrobaculum aerophilum (strain ATCC 51768 / DSM 7523 / JCM 9630 / CIP 104966 / NBRC 100827 / IM2) protein is Probable Brix domain-containing ribosomal biogenesis protein.